A 301-amino-acid chain; its full sequence is Mitochondrial import receptor subunit TOM40 homolog (301 aa).

The segment covering 1–19 (MATPTESELASPIPQTNPG) has biased composition (polar residues). The interval 1-20 (MATPTESELASPIPQTNPGS) is disordered.

It belongs to the Tom40 family. In terms of assembly, forms part of the preprotein translocase complex of the outer mitochondrial membrane (TOM complex). Interacts with mitochondrial targeting sequences. As to expression, ubiquitously expressed, but highly expressed in the pharyngeal muscles, the nerve ring, the intestine, gonadal sheath and in the tail hypodermis.

The protein localises to the mitochondrion outer membrane. Its function is as follows. Channel-forming protein essential for import of protein precursors into mitochondria. Specifically required for nnt-1 accumulation in the mitochondria and may be involved in the secretion of daf-28/insulin from the mitochondria. Required for embryonic and larval development. In Caenorhabditis elegans, this protein is Mitochondrial import receptor subunit TOM40 homolog.